The primary structure comprises 172 residues: Large ribosomal subunit protein uL10 (172 aa).

Belongs to the universal ribosomal protein uL10 family. As to quaternary structure, part of the ribosomal stalk of the 50S ribosomal subunit. The N-terminus interacts with L11 and the large rRNA to form the base of the stalk. The C-terminus forms an elongated spine to which L12 dimers bind in a sequential fashion forming a multimeric L10(L12)X complex.

Functionally, forms part of the ribosomal stalk, playing a central role in the interaction of the ribosome with GTP-bound translation factors. The protein is Large ribosomal subunit protein uL10 of Rhizobium rhizogenes (strain K84 / ATCC BAA-868) (Agrobacterium radiobacter).